Here is a 250-residue protein sequence, read N- to C-terminus: High affinity immunoglobulin epsilon receptor subunit alpha (250 aa).

The signal sequence occupies residues 1 to 23 (MVTGRSAQLCLALLFMSLDVILT). At 24 to 204 (ATEKSVLTLD…AYKCKYYWLQ (181 aa)) the chain is on the extracellular side. One can recognise an Ig-like 1 domain in the interval 28–104 (SVLTLDPPWI…QGLFKSKPVY (77 aa)). C49 and C92 are disulfide-bonded. N-linked (GlcNAc...) asparagine glycosylation is found at N58, N66, N73, N106, N152, and N167. Residues 114–181 (LQTSADMVLV…YHCKGYLRQV (68 aa)) form the Ig-like 2 domain. An intrachain disulfide couples C131 to C174. A helical membrane pass occupies residues 205–223 (LIFPLLVAILFAVDTGLLL). Topologically, residues 224 to 250 (STEEQFKSVLEIQKTGKYKKVETELLT) are cytoplasmic.

In terms of assembly, tetramer of an alpha chain, a beta chain, and two disulfide linked gamma chains. Interacts with IGHE (via CH3 region). As to expression, expressed in bone marrow mast cells, as well as in the pineal gland at night.

The protein localises to the cell membrane. Its function is as follows. High-affinity receptor for immunoglobulin epsilon/IgE. Mediates IgE effector functions in myeloid cells. Upon IgE binding and antigen/allergen cross-linking initiates signaling pathways that lead to myeloid cell activation and differentiation. On mast cells, basophils and eosinophils stimulates the secretion of vasoactive amines, lipid mediators and cytokines that contribute to inflammatory response, tissue remodeling and cytotoxicity against microbes. Triggers the immediate hypersensitivity response to allergens as a host defense mechanism against helminth parasites, pathogenic bacteria and venom toxicity. When dysregulated, it can elicit harmful life-threatening allergic and anaphylactic reactions. The chain is High affinity immunoglobulin epsilon receptor subunit alpha (Fcer1a) from Mus musculus (Mouse).